Consider the following 203-residue polypeptide: Glycerol-3-phosphate acyltransferase (203 aa).

A run of 4 helical transmembrane segments spans residues 1–21 (MIQTAFTALLLLAIGYLLGAI), 84–104 (WLQVLTGLAALAGHIWPVWLG), 117–137 (IFLGLAWPVGLACFGLFMAVI), and 157–179 (LMLLSGSSSAYVVVSLVASLMVL).

This sequence belongs to the PlsY family. As to quaternary structure, probably interacts with PlsX.

It localises to the cell inner membrane. The enzyme catalyses an acyl phosphate + sn-glycerol 3-phosphate = a 1-acyl-sn-glycero-3-phosphate + phosphate. It participates in lipid metabolism; phospholipid metabolism. In terms of biological role, catalyzes the transfer of an acyl group from acyl-phosphate (acyl-PO(4)) to glycerol-3-phosphate (G3P) to form lysophosphatidic acid (LPA). This enzyme utilizes acyl-phosphate as fatty acyl donor, but not acyl-CoA or acyl-ACP. In Synechococcus sp. (strain CC9605), this protein is Glycerol-3-phosphate acyltransferase.